The primary structure comprises 200 residues: Sperm acrosome developmental regulator (200 aa).

S63 carries the post-translational modification Phosphoserine. The segment covering 167-183 has biased composition (basic residues); it reads QERRRRRRMRSHASHTS. Residues 167-200 are disordered; sequence QERRRRRRMRSHASHTSRHSESVQGLKHDARSPL. The span at 184 to 200 shows a compositional bias: basic and acidic residues; the sequence is RHSESVQGLKHDARSPL.

It localises to the cytoplasmic vesicle. The protein resides in the secretory vesicle. It is found in the acrosome. In terms of biological role, may play an important role in acrosome formation and nucleus shaping during spermiogenesis. This Rattus norvegicus (Rat) protein is Sperm acrosome developmental regulator (Spacdr).